An 87-amino-acid chain; its full sequence is Cell division topological specificity factor (87 aa).

This sequence belongs to the MinE family.

Functionally, prevents the cell division inhibition by proteins MinC and MinD at internal division sites while permitting inhibition at polar sites. This ensures cell division at the proper site by restricting the formation of a division septum at the midpoint of the long axis of the cell. This Leptothrix cholodnii (strain ATCC 51168 / LMG 8142 / SP-6) (Leptothrix discophora (strain SP-6)) protein is Cell division topological specificity factor.